The primary structure comprises 97 residues: Scorpine-like peptide Ev37 (97 aa).

The first 19 residues, 1–19 (MNSKLTVIVLLALITIASC), serve as a signal peptide directing secretion. One can recognise a BetaSPN-type CS-alpha/beta domain in the interval 55 to 95 (QNLCAFNVDTVGMCDADCKRQGKAKGVCHGTKCKCDVELSY). Cystine bridges form between Cys58-Cys82, Cys68-Cys87, and Cys72-Cys89.

It belongs to the long chain scorpion toxin family. Class 3 subfamily. In terms of tissue distribution, expressed by the venom gland.

Its subcellular location is the secreted. Its function is as follows. Selectively inhibits Kv1.3/KCNA3 channel (IC(50)=0.95 uM). Both N-terminal and C-terminal domains are likely involved in the interaction with Kv1.3/KCNA3, since neither its N-terminal domain (1-36) nor its C-terminal domain (37-78) block Kv1.3/KCNA3 channel. In Euscorpiops validus (Scorpion), this protein is Scorpine-like peptide Ev37.